The chain runs to 367 residues: Probable protein phosphatase 2C 67 (367 aa).

The disordered stretch occupies residues 1-79 (MAHQKREATS…DEKAATNSNV (79 aa)). Residues 31–46 (AEKEHILTSDASHETN) show a composition bias toward basic and acidic residues. Positions 91 to 365 (EADAAEDKGC…DNCTAVLIVF (275 aa)) constitute a PPM-type phosphatase domain. 4 residues coordinate Mn(2+): Asp131, Gly132, Asp312, and Asp356.

The protein belongs to the PP2C family. It depends on Mg(2+) as a cofactor. Mn(2+) is required as a cofactor.

It catalyses the reaction O-phospho-L-seryl-[protein] + H2O = L-seryl-[protein] + phosphate. The catalysed reaction is O-phospho-L-threonyl-[protein] + H2O = L-threonyl-[protein] + phosphate. In Oryza sativa subsp. japonica (Rice), this protein is Probable protein phosphatase 2C 67.